We begin with the raw amino-acid sequence, 389 residues long: Succinate--CoA ligase [ADP-forming] subunit beta (389 aa).

The ATP-grasp domain occupies 9–236 (RDLFEAHGVP…ERTEDPLEAK (228 aa)). Residues Lys-45, 52–54 (GRG), Ala-94, and Glu-99 each bind ATP. Asn-191 and Asp-205 together coordinate Mg(2+). Substrate-binding positions include Asn-256 and 318–320 (GIT).

This sequence belongs to the succinate/malate CoA ligase beta subunit family. Heterotetramer of two alpha and two beta subunits. Mg(2+) serves as cofactor.

It catalyses the reaction succinate + ATP + CoA = succinyl-CoA + ADP + phosphate. It carries out the reaction GTP + succinate + CoA = succinyl-CoA + GDP + phosphate. It functions in the pathway carbohydrate metabolism; tricarboxylic acid cycle; succinate from succinyl-CoA (ligase route): step 1/1. Functionally, succinyl-CoA synthetase functions in the citric acid cycle (TCA), coupling the hydrolysis of succinyl-CoA to the synthesis of either ATP or GTP and thus represents the only step of substrate-level phosphorylation in the TCA. The beta subunit provides nucleotide specificity of the enzyme and binds the substrate succinate, while the binding sites for coenzyme A and phosphate are found in the alpha subunit. The protein is Succinate--CoA ligase [ADP-forming] subunit beta of Micrococcus luteus (strain ATCC 4698 / DSM 20030 / JCM 1464 / CCM 169 / CCUG 5858 / IAM 1056 / NBRC 3333 / NCIMB 9278 / NCTC 2665 / VKM Ac-2230) (Micrococcus lysodeikticus).